Reading from the N-terminus, the 382-residue chain is Cysteine desulfurase IscS 1 (382 aa).

Pyridoxal 5'-phosphate is bound at residue asparagine 149. Cysteine 321 serves as the catalytic Cysteine persulfide intermediate. Cysteine 321 is a binding site for [2Fe-2S] cluster.

It belongs to the class-V pyridoxal-phosphate-dependent aminotransferase family. NifS/IscS subfamily. Homodimer. Forms a heterotetramer with IscU, interacts with other sulfur acceptors. Pyridoxal 5'-phosphate is required as a cofactor.

The protein localises to the cytoplasm. The enzyme catalyses (sulfur carrier)-H + L-cysteine = (sulfur carrier)-SH + L-alanine. It participates in cofactor biosynthesis; iron-sulfur cluster biosynthesis. In terms of biological role, master enzyme that delivers sulfur to a number of partners involved in Fe-S cluster assembly, tRNA modification or cofactor biosynthesis. Catalyzes the removal of elemental sulfur atoms from cysteine to produce alanine. Functions as a sulfur delivery protein for Fe-S cluster synthesis onto IscU, an Fe-S scaffold assembly protein, as well as other S acceptor proteins. The chain is Cysteine desulfurase IscS 1 from Archaeoglobus fulgidus (strain ATCC 49558 / DSM 4304 / JCM 9628 / NBRC 100126 / VC-16).